Here is a 446-residue protein sequence, read N- to C-terminus: tRNA modification GTPase MnmE (446 aa).

Residues Arg22, Glu80, and Arg119 each coordinate (6S)-5-formyl-5,6,7,8-tetrahydrofolate. A TrmE-type G domain is found at 215-370 (GFKVAIIGKP…LILALENIMN (156 aa)). Asn225 provides a ligand contact to K(+). Residues 225 to 230 (NVGKSS), 244 to 250 (SDIAGTT), and 269 to 272 (DTAG) each bind GTP. Ser229 serves as a coordination point for Mg(2+). K(+)-binding residues include Ser244, Ile246, and Thr249. Position 250 (Thr250) interacts with Mg(2+). Position 446 (Lys446) interacts with (6S)-5-formyl-5,6,7,8-tetrahydrofolate.

The protein belongs to the TRAFAC class TrmE-Era-EngA-EngB-Septin-like GTPase superfamily. TrmE GTPase family. As to quaternary structure, homodimer. Heterotetramer of two MnmE and two MnmG subunits. K(+) serves as cofactor.

The protein resides in the cytoplasm. Functionally, exhibits a very high intrinsic GTPase hydrolysis rate. Involved in the addition of a carboxymethylaminomethyl (cmnm) group at the wobble position (U34) of certain tRNAs, forming tRNA-cmnm(5)s(2)U34. In Sulfurimonas denitrificans (strain ATCC 33889 / DSM 1251) (Thiomicrospira denitrificans (strain ATCC 33889 / DSM 1251)), this protein is tRNA modification GTPase MnmE.